We begin with the raw amino-acid sequence, 107 residues long: Flagellar transcriptional regulator FlhD (107 aa).

This sequence belongs to the FlhD family. As to quaternary structure, homodimer; disulfide-linked. Forms a heterohexamer composed of two FlhC and four FlhD subunits. Each FlhC binds a FlhD dimer, forming a heterotrimer, and a hexamer assembles by dimerization of two heterotrimers.

It localises to the cytoplasm. Its function is as follows. Functions in complex with FlhC as a master transcriptional regulator that regulates transcription of several flagellar and non-flagellar operons by binding to their promoter region. Activates expression of class 2 flagellar genes, including fliA, which is a flagellum-specific sigma factor that turns on the class 3 genes. Also regulates genes whose products function in a variety of physiological pathways. The sequence is that of Flagellar transcriptional regulator FlhD from Bordetella pertussis (strain Tohama I / ATCC BAA-589 / NCTC 13251).